A 413-amino-acid chain; its full sequence is Aspartate kinase (413 aa).

ACT domains follow at residues 267 to 341 and 347 to 413; these read LTIR…GDTK and IVGV…RQGE.

Belongs to the aspartokinase family. In terms of assembly, homotrimer. In the presence of inhibitory amino acids the Stokes radius of the protein increases, suggesting its oligomeric state may change.

The protein localises to the cytoplasm. It catalyses the reaction L-aspartate + ATP = 4-phospho-L-aspartate + ADP. It functions in the pathway amino-acid biosynthesis; L-lysine biosynthesis via DAP pathway; (S)-tetrahydrodipicolinate from L-aspartate: step 1/4. The protein operates within amino-acid biosynthesis; L-methionine biosynthesis via de novo pathway; L-homoserine from L-aspartate: step 1/3. Its pathway is amino-acid biosynthesis; L-threonine biosynthesis; L-threonine from L-aspartate: step 1/5. Activated by L-lysine, L-methionine, and L-isoleucine. L-threonine, at low concentrations, is a mild activator and has a weak inhibitory effect only at concentrations over 10 mM. Strongly feedback inhibited by the concerted combination of L-lysine and L-threonine and slightly feedback inhibited by the concerted combination of L-threonine and L-methionine. Activated by the combination of L-methionine and L-lysine, L-methionine and L-isoleucine and L-lysine and L-isoleucine. Its function is as follows. Involved in the biosynthesis of L-aspartate-beta-semialdehyde which is a central intermediate in the biosynthesis of different amino acids (L-lysine, L-methionine, L-threonine). Catalyzes the phosphorylation of the beta-carboxyl group of L-aspartate to yield 4-phospho-L-aspartate. The chain is Aspartate kinase from Pseudomonas fluorescens (strain SBW25).